A 237-amino-acid chain; its full sequence is Demethylmenaquinone methyltransferase (237 aa).

S-adenosyl-L-methionine contacts are provided by residues threonine 58, aspartate 79, and 106 to 107; that span reads NA.

Belongs to the class I-like SAM-binding methyltransferase superfamily. MenG/UbiE family.

The enzyme catalyses a 2-demethylmenaquinol + S-adenosyl-L-methionine = a menaquinol + S-adenosyl-L-homocysteine + H(+). Its pathway is quinol/quinone metabolism; menaquinone biosynthesis; menaquinol from 1,4-dihydroxy-2-naphthoate: step 2/2. Its function is as follows. Methyltransferase required for the conversion of demethylmenaquinol (DMKH2) to menaquinol (MKH2). The sequence is that of Demethylmenaquinone methyltransferase from Listeria innocua serovar 6a (strain ATCC BAA-680 / CLIP 11262).